We begin with the raw amino-acid sequence, 151 residues long: Nucleoside diphosphate kinase (151 aa).

5 residues coordinate ATP: Lys11, Phe59, Arg87, Arg104, and Asn114. His117 (pros-phosphohistidine intermediate) is an active-site residue.

It belongs to the NDK family. As to quaternary structure, homotrimer. It depends on Mg(2+) as a cofactor.

The catalysed reaction is a 2'-deoxyribonucleoside 5'-diphosphate + ATP = a 2'-deoxyribonucleoside 5'-triphosphate + ADP. The enzyme catalyses a ribonucleoside 5'-diphosphate + ATP = a ribonucleoside 5'-triphosphate + ADP. Major role in the synthesis of nucleoside triphosphates other than ATP. The ATP gamma phosphate is transferred to the NDP beta phosphate via a ping-pong mechanism, using a phosphorylated active-site intermediate. This chain is Nucleoside diphosphate kinase (ndk1), found in Schizosaccharomyces pombe (strain 972 / ATCC 24843) (Fission yeast).